The primary structure comprises 359 residues: EGF-like domain containing protein 2 (359 aa).

The first 20 residues, 1–20 (MPPFISHFFLLSTFASLALC), serve as a signal peptide directing secretion. 2 EGF-like domains span residues 21–55 (SFYC…FNCG) and 61–93 (ISAA…PTCQ). 6 cysteine pairs are disulfide-bonded: Cys-24–Cys-37, Cys-31–Cys-43, Cys-45–Cys-54, Cys-65–Cys-75, Cys-69–Cys-81, and Cys-83–Cys-92.

As to expression, prismatic layer of shell (at protein level). Expressed primarily in the mantle with highest level in the mantle edge and lower level in the mantle pallium.

It is found in the secreted. The protein is EGF-like domain containing protein 2 of Margaritifera margaritifera (Freshwater pearl mussel).